Consider the following 332-residue polypeptide: L-lactate dehydrogenase A chain (332 aa).

An N-acetylalanine modification is found at Ala2. N6-acetyllysine; alternate is present on Lys5. Lys5 is subject to N6-succinyllysine; alternate. An N6-acetyllysine modification is found at Lys14. At Thr18 the chain carries Phosphothreonine. 29–57 (GAVGMACAISILMKDLADELALVDVIEDK) contributes to the NAD(+) binding site. Lys57 is modified (N6-acetyllysine; alternate). Lys57 participates in a covalent cross-link: Glycyl lysine isopeptide (Lys-Gly) (interchain with G-Cter in SUMO2); alternate. At Lys81 the chain carries N6-acetyllysine. NAD(+) is bound at residue Arg99. Arg106 is a binding site for substrate. At Lys118 the chain carries N6-acetyllysine; alternate. Residue Lys118 is modified to N6-succinyllysine; alternate. Lys126 carries the post-translational modification N6-acetyllysine. Residues Asn138 and Arg169 each coordinate substrate. His193 functions as the Proton acceptor in the catalytic mechanism. N6-acetyllysine occurs at positions 224 and 232. Phosphotyrosine is present on Tyr239. Lys243 is subject to N6-acetyllysine. Thr248 is a substrate binding site. Residue Thr309 is modified to Phosphothreonine. Ser310 is modified (phosphoserine). An N6-acetyllysine; alternate modification is found at Lys318. At Lys318 the chain carries N6-succinyllysine; alternate. Thr322 carries the phosphothreonine modification.

Belongs to the LDH/MDH superfamily. LDH family. In terms of assembly, homotetramer. Interacts with PTEN upstream reading frame protein MP31. ISGylated.

The protein localises to the cytoplasm. It catalyses the reaction (S)-lactate + NAD(+) = pyruvate + NADH + H(+). The protein operates within fermentation; pyruvate fermentation to lactate; (S)-lactate from pyruvate: step 1/1. Functionally, interconverts simultaneously and stereospecifically pyruvate and lactate with concomitant interconversion of NADH and NAD(+). The sequence is that of L-lactate dehydrogenase A chain (LDHA) from Pan troglodytes (Chimpanzee).